We begin with the raw amino-acid sequence, 524 residues long: Cytokinin dehydrogenase 7 (524 aa).

The signal sequence occupies residues 1–22; it reads MAARCSIAFMIMASCLSVVVSG. An N-linked (GlcNAc...) asparagine glycan is attached at asparagine 42. The 179-residue stretch at 55 to 233 folds into the FAD-binding PCMH-type domain; the sequence is VAAAPEAVLH…TRARIGLMPA (179 aa). 2 residues coordinate FAD: glycine 91 and glycine 93. Histidine 94 is subject to Pros-8alpha-FAD histidine. FAD is bound by residues serine 95 and glutamine 99. A glycan (N-linked (GlcNAc...) asparagine) is linked at asparagine 121. FAD contacts are provided by aspartate 157, threonine 162, serine 168, isoleucine 172, and isoleucine 223. N-linked (GlcNAc...) asparagine glycans are attached at residues asparagine 277 and asparagine 320. FAD-binding residues include tyrosine 472, serine 507, and glutamine 510.

This sequence belongs to the oxygen-dependent FAD-linked oxidoreductase family. As to quaternary structure, monomer. It depends on FAD as a cofactor.

The protein resides in the secreted. Its subcellular location is the extracellular space. It carries out the reaction N(6)-dimethylallyladenine + A + H2O = 3-methyl-2-butenal + adenine + AH2. Its function is as follows. Catalyzes the oxidation of cytokinins, a family of N(6)-substituted adenine derivatives that are plant hormones, where the substituent is an isopentenyl group. The protein is Cytokinin dehydrogenase 7 (CKX7) of Oryza sativa subsp. japonica (Rice).